Consider the following 232-residue polypeptide: MAGDVGGRSCTDAELLLHPELLSQEFLLLTLEQKNIAVENEVRVNKDNLTDLYVQHAIPLPQRDLPKNRWGKMMEKKREHHEVKNDTKRSSAVDGLRKRPLIVFDGSSTSTSIKVKRTENGADDRLKPLAQIGSTSDAFWKSPNSSSRISPLVLFSNLPVNHKMEHNNNDTQQNHDLMNRKSPSGPVKSPPLSPVGTTPVKLKRAAPKEEAEATNHLKPPEVKRKIQHVTWP.

Residues Ser112, Ser182, Ser184, Ser189, and Ser193 each carry the phosphoserine modification. The disordered stretch occupies residues 163–232 (KMEHNNNDTQ…KRKIQHVTWP (70 aa)). Phosphothreonine is present on residues Thr197 and Thr198. The span at 206–224 (APKEEAEATNHLKPPEVKR) shows a compositional bias: basic and acidic residues.

This sequence belongs to the ashwin family. Component of the tRNA-splicing ligase complex.

It localises to the nucleus. The protein is Ashwin of Mus musculus (Mouse).